A 346-amino-acid chain; its full sequence is tRNA N6-adenosine threonylcarbamoyltransferase (346 aa).

Fe cation is bound by residues histidine 111 and histidine 115. Residues 134–138, aspartate 167, glycine 180, and asparagine 279 each bind substrate; that span reads LVSGG. Position 307 (aspartate 307) interacts with Fe cation.

The protein belongs to the KAE1 / TsaD family. The cofactor is Fe(2+).

It is found in the cytoplasm. The enzyme catalyses L-threonylcarbamoyladenylate + adenosine(37) in tRNA = N(6)-L-threonylcarbamoyladenosine(37) in tRNA + AMP + H(+). Required for the formation of a threonylcarbamoyl group on adenosine at position 37 (t(6)A37) in tRNAs that read codons beginning with adenine. Is involved in the transfer of the threonylcarbamoyl moiety of threonylcarbamoyl-AMP (TC-AMP) to the N6 group of A37, together with TsaE and TsaB. TsaD likely plays a direct catalytic role in this reaction. The polypeptide is tRNA N6-adenosine threonylcarbamoyltransferase (Burkholderia thailandensis (strain ATCC 700388 / DSM 13276 / CCUG 48851 / CIP 106301 / E264)).